Consider the following 708-residue polypeptide: tRNA(Met) cytidine acetyltransferase TmcA (708 aa).

ATP contacts are provided by residues glutamine 189, 215-224 (GRGKTSALGL), and arginine 357. In terms of domain architecture, N-acetyltransferase spans 398-574 (PECVEQPERL…YSLLMVRGEH (177 aa)). Acetyl-CoA-binding positions include 502 to 504 (IAV) and 509 to 515 (QRQGIGS).

The protein belongs to the RNA cytidine acetyltransferase family. TmcA subfamily.

The protein resides in the cytoplasm. It catalyses the reaction cytidine(34) in elongator tRNA(Met) + acetyl-CoA + ATP + H2O = N(4)-acetylcytidine(34) in elongator tRNA(Met) + ADP + phosphate + CoA + H(+). Its function is as follows. Catalyzes the formation of N(4)-acetylcytidine (ac(4)C) at the wobble position of tRNA(Met), by using acetyl-CoA as an acetyl donor and ATP (or GTP). The chain is tRNA(Met) cytidine acetyltransferase TmcA from Vibrio cholerae serotype O1 (strain ATCC 39315 / El Tor Inaba N16961).